The primary structure comprises 361 residues: 45 kDa calcium-binding protein (361 aa).

Residues 1–35 (MVWLVAMTSRQRSLCGLAAHGLWFLGLVLLMDATA) form the signal peptide. The N-linked (GlcNAc...) asparagine glycan is linked to Asn-39. EF-hand domains are found at residues 97-132 (RSRRKLMVIFSKVDVNTDRRISAKEMQHWIMEKTAE) and 136-171 (EAVKENKLHFRAVDPDGDGHVSWDEYKVKFLASKGH). Ser-98 carries the phosphoserine modification. The Ca(2+) site is built by Asp-110, Asn-112, Asp-114, Arg-116, Glu-121, Asp-149, Asp-151, Asp-153, His-155, and Glu-160. A Phosphothreonine modification is found at Thr-192. EF-hand domains are found at residues 196 to 231 (LGNLRDRWYQADNPPADLLLTEDEFLSFLHPEHSRG), 232 to 267 (MLKFMVKEIVRDLDQDGDKQLSLPEFISLPVGTVEN), 277 to 312 (WVKDRKKEFEELIDSNHDGIVTMEELENYMDPMNEY), and 313 to 348 (NALNEAKQMIAIADENQNHHLEPEEILKYSEFFTGS). Asp-212 lines the Ca(2+) pocket. Thr-216 is modified (phosphothreonine). Residues Glu-219, Asp-245, Asp-247, Asp-249, Gln-251, and Glu-256 each contribute to the Ca(2+) site. Residue Thr-264 is modified to Phosphothreonine. Ca(2+) is bound by residues Asp-290, Asn-292, and Asp-294. At Thr-298 the chain carries Phosphothreonine. Ca(2+) is bound by residues Glu-301, Asp-326, Asn-328, Asn-330, His-332, and Glu-337. The interval 308 to 361 (PMNEYNALNEAKQMIAIADENQNHHLEPEEILKYSEFFTGSKLMDYARNVHEEF) is necessary for intracellular retention in Golgi apparatus lumen.

The protein belongs to the CREC family. In terms of assembly, a membrane-associated isoform interacts with STX3 and STXBP1. As to expression, a membrane-associated isoform is expressed in acini of the pancreas (at protein level). Ubiquitous.

It is found in the golgi apparatus lumen. Functionally, a membrane-associated isoform may be involved in the exocytosis of zymogens by pancreatic acini. May regulate calcium-dependent activities in the endoplasmic reticulum lumen or post-ER compartment. The protein is 45 kDa calcium-binding protein (Sdf4) of Rattus norvegicus (Rat).